We begin with the raw amino-acid sequence, 366 residues long: Aminomethyltransferase (366 aa).

This sequence belongs to the GcvT family. As to quaternary structure, the glycine cleavage system is composed of four proteins: P, T, L and H.

It carries out the reaction N(6)-[(R)-S(8)-aminomethyldihydrolipoyl]-L-lysyl-[protein] + (6S)-5,6,7,8-tetrahydrofolate = N(6)-[(R)-dihydrolipoyl]-L-lysyl-[protein] + (6R)-5,10-methylene-5,6,7,8-tetrahydrofolate + NH4(+). In terms of biological role, the glycine cleavage system catalyzes the degradation of glycine. This chain is Aminomethyltransferase, found in Moorella thermoacetica (strain ATCC 39073 / JCM 9320).